We begin with the raw amino-acid sequence, 389 residues long: Mannuronan synthase (389 aa).

Residues 16–116 (QRQFARVKLP…EVAALRYLIT (101 aa)) enclose the PilZ domain.

The protein belongs to the Alg44 family.

The protein localises to the periplasm. It carries out the reaction [(1-&gt;4)-beta-D-mannuronosyl](n) + GDP-alpha-D-mannuronate = [(1-&gt;4)-beta-D-mannuronosyl](n+1) + GDP + H(+). Its pathway is glycan biosynthesis; alginate biosynthesis. Functionally, required for alginate biosynthesis. The chain is Mannuronan synthase (alg44) from Pseudomonas aeruginosa (strain ATCC 15692 / DSM 22644 / CIP 104116 / JCM 14847 / LMG 12228 / 1C / PRS 101 / PAO1).